We begin with the raw amino-acid sequence, 102 residues long: Small ribosomal subunit protein eS24 (102 aa).

Belongs to the eukaryotic ribosomal protein eS24 family.

The chain is Small ribosomal subunit protein eS24 from Methanococcus aeolicus (strain ATCC BAA-1280 / DSM 17508 / OCM 812 / Nankai-3).